A 116-amino-acid polypeptide reads, in one-letter code: Protein SPIRAL1-like 1 (116 aa).

Residues 1 to 12 are compositionally biased toward gly residues; sequence MSRGGSAGGGQS. Positions 1–116 are disordered; it reads MSRGGSAGGG…SSLGYLFGGN (116 aa). Residues 27–43 are compositionally biased toward pro residues; the sequence is AAKPAPAAAPAPAPAPA. Low complexity predominate over residues 44–60; that stretch reads PAAAVAAPAEKPSPAKA. Polar residues predominate over residues 72-90; the sequence is GSRSNNNYHRADGQNTGNF. Residues 103-116 show a composition bias toward gly residues; that stretch reads PGGGSSLGYLFGGN.

Belongs to the SPIRAL1 family.

Acts in maintaining the cortical microtubules organization essential for anisotropic cell growth. The protein is Protein SPIRAL1-like 1 of Oryza sativa subsp. japonica (Rice).